The following is a 4226-amino-acid chain: Guanylate cyclase alpha (4226 aa).

Residues 1 to 104 (MSDSKKHYNE…SFIFKGLYEQ (104 aa)) are Cytoplasmic-facing. A helical transmembrane segment spans residues 105–125 (FLRLPNIWFLLISLLEFIPQY). Over 126-131 (QNLSNY) the chain is Extracellular. A glycan (N-linked (GlcNAc...) asparagine) is linked at Asn127. Residues 132 to 152 (MYYSKHSSFFLLLFFICVSII) traverse the membrane as a helical segment. At 153 to 337 (KNIYEDSRRS…LGYVNKELNS (185 aa)) the chain is on the cytoplasmic side. A helical transmembrane segment spans residues 338 to 358 (YTIIGLIFTFICVFISVLFKW). The Extracellular segment spans residues 359 to 392 (TEDDKFRNGSHFFLITVKDNICESIVKYTLLYSN). A glycan (N-linked (GlcNAc...) asparagine) is linked at Asn366. Residues 393–413 (IIPISILISVDLISILQSILI) traverse the membrane as a helical segment. The Cytoplasmic portion of the chain corresponds to 414–2083 (ENDNHISTFE…FIYGSKHLYT (1670 aa)). Disordered stretches follow at residues 552–572 (EHSQ…NNIC), 832–904 (SSKN…SNND), 968–989 (INNN…KSSS), and 1740–1765 (NINK…NNSN). Residues 558-570 (DNNNNNDNNNNNN) are compositionally biased toward low complexity. A compositionally biased stretch (acidic residues) spans 838–847 (TLDDPTELIS). Over residues 854 to 873 (LRDKYEHTSDKKNDTNKNRD) the composition is skewed to basic and acidic residues. The segment covering 874–904 (GANNSNNNNNKDVSNNKNKNNNNYNYNSNND) has biased composition (low complexity). Residues 1745–1754 (YKYDKNDKHN) show a composition bias toward basic and acidic residues. Positions 1755–1765 (NNNNNNNNNSN) are enriched in low complexity. Residues 2084 to 2104 (ISIILYWNFFKNILLILPIFF) form a helical membrane-spanning segment. Topologically, residues 2105-2119 (YQAYASWSCVKIYPE) are extracellular. The chain crosses the membrane as a helical span at residues 2120-2140 (LLYTFFSIFWVFIPIIYYMFL). The Cytoplasmic portion of the chain corresponds to 2141-2169 (QHNLNYDILYNIPLFYALSRRRYNMNCFK). A helical transmembrane segment spans residues 2170–2190 (FLPWIFEAIFYSMIIYFFAYA). The Extracellular segment spans residues 2191–2202 (ALKENSHLNNGE). Residues 2203–2223 (VITINTFGNICFIGCLLISIL) traverse the membrane as a helical segment. Over 2224-2235 (RLFLEGSLWSPS) the chain is Cytoplasmic. The chain crosses the membrane as a helical span at residues 2236 to 2256 (ILITCFGCFLFVFFPSLLFIC). Residues 2257 to 2275 (FAYLSNEYIREVFRQTFLW) lie on the Extracellular side of the membrane. Residues 2276–2296 (APLYVLLILWFSTCIISYIFI) form a helical membrane-spanning segment. Topologically, residues 2297-2787 (NFTKSILFPN…QIHKKNKFYK (491 aa)) are cytoplasmic. Residues 2477-2505 (NNDNNNDDNDNDNNNNNNNNDNYNNNDHN) form a disordered region. Positions 2488–2502 (DNNNNNNNNDNYNNN) are enriched in low complexity. Residues 2788–2808 (TFTPWYRFIFLLLGVFFLYVW) traverse the membrane as a helical segment. Residues 2809–2828 (KLESSLSQLWNMPSDASTDV) are Extracellular-facing. A helical membrane pass occupies residues 2829-2849 (FILFLSLLLELVLLAATVTTF). Residues 2850-2860 (FSNIFIENFNK) are Cytoplasmic-facing. Residues 2861 to 2881 (IISAVVILIITYHVVSYSVTH) traverse the membrane as a helical segment. The Extracellular portion of the chain corresponds to 2882-2900 (IDGVFQAVLFPLYTFVILR). A helical transmembrane segment spans residues 2901–2921 (LPFVNAVLCNIIFLGLFIIRF). The Cytoplasmic portion of the chain corresponds to 2922-2930 (NGDHFLDKK). Residues 2931 to 2951 (GLAHYIPLFIGVDVFVGFVGY) form a helical membrane-spanning segment. Residues 2952–3008 (RLEYNQRKNFLLEYSVESSRRKQREILNTMLPPFVVDEMIYSELNEEGIPISLKAED) lie on the Extracellular side of the membrane. The chain crosses the membrane as a helical span at residues 3009 to 3029 (ISTVTIIFCDIYDFQNIVASI). The Guanylate cyclase 1 domain occupies 3013-3270 (TIIFCDIYDF…DTVNTASRMK (258 aa)). At 3030–3738 (EPTRLVEVLD…SNINSIEQAL (709 aa)) the chain is on the cytoplasmic side. Disordered regions lie at residues 3077-3150 (EDEL…FEED) and 3201-3230 (DAND…NNKP). Low complexity-rich tracts occupy residues 3083-3098 (NKYS…NYYY) and 3108-3138 (NNNN…NNVN). Acidic residues predominate over residues 3140-3150 (SDDDGDFFEED). A compositionally biased stretch (basic and acidic residues) spans 3201–3220 (DANDDTHNVNDSFNNDKAEN). A helical membrane pass occupies residues 3739 to 3759 (IIFLVTFVMQTLISSTVSIVF). Residues 3760–3773 (IDHKRATQTLHINY) are Extracellular-facing. Residues 3774-3794 (FAYWSVRSVYTFFGFVLWLLF) form a helical membrane-spanning segment. Over 3795 to 3811 (HYRTRPEVSSLLNIKWM) the chain is Cytoplasmic. Residues 3812–3832 (IFFLNLLFISAACVFSIAYLW) traverse the membrane as a helical segment. Topologically, residues 3833-3840 (AISETDQT) are extracellular. The chain crosses the membrane as a helical span at residues 3841 to 3861 (TSYTIWMTNDTIEFFFYLVIL). Over 3862–3871 (HHNTGMLFQT) the chain is Cytoplasmic. A helical transmembrane segment spans residues 3872-3892 (CILVDLLFITMSLTFIATSVV). A topological domain (extracellular) is located at residue Lys3893. A helical transmembrane segment spans residues 3894–3914 (TITTDSTVLLIPWYVAFNLIS). At 3915-4226 (TYCKESIDRR…INVNDRQSNL (312 aa)) the chain is on the cytoplasmic side. Residues 3970–4104 (TFLFADICGF…IDVLTGNLME (135 aa)) enclose the Guanylate cyclase 2 domain. Positions 3975, 3976, and 4019 each coordinate Mg(2+).

The protein in the N-terminal section; belongs to the cation transport ATPase (P-type) (TC 3.A.3) family. Type IV subfamily. It in the C-terminal section; belongs to the adenylyl cyclase class-4/guanylyl cyclase family. Mg(2+) serves as cofactor. The cofactor is Mn(2+).

The protein localises to the cell membrane. It localises to the cytoplasmic vesicle membrane. The enzyme catalyses GTP = 3',5'-cyclic GMP + diphosphate. Its function is as follows. Catalyzes the synthesis of the second messenger cGMP from GTP. In asexual blood stage schizonts, required for cGMP production which is essential for PKG activation, PKG-dependent Ca(2+) release, and ultimately merozoite egress from host erythrocytes. This is Guanylate cyclase alpha from Plasmodium falciparum (isolate 3D7).